A 206-amino-acid polypeptide reads, in one-letter code: Small ribosomal subunit protein uS4 (206 aa).

An S4 RNA-binding domain is found at 96–156; it reads SRLDNVVYRM…EKSRNQSRIA (61 aa).

Belongs to the universal ribosomal protein uS4 family. In terms of assembly, part of the 30S ribosomal subunit. Contacts protein S5. The interaction surface between S4 and S5 is involved in control of translational fidelity.

In terms of biological role, one of the primary rRNA binding proteins, it binds directly to 16S rRNA where it nucleates assembly of the body of the 30S subunit. Functionally, with S5 and S12 plays an important role in translational accuracy. The protein is Small ribosomal subunit protein uS4 of Hydrogenovibrio crunogenus (strain DSM 25203 / XCL-2) (Thiomicrospira crunogena).